A 27-amino-acid chain; its full sequence is Ferric reductase B (27 aa).

In terms of assembly, homodimer. FAD is required as a cofactor.

It catalyses the reaction 2 a Fe(II)-siderophore + NAD(+) + H(+) = 2 a Fe(III)-siderophore + NADH. In terms of biological role, reductase activity that acts on Fe(3+)-chelates and uses both NADH and NADPH as electron donors. May play a role in iron uptake. The chain is Ferric reductase B (ferB) from Paracoccus denitrificans.